The chain runs to 316 residues: Small kinetochore-associated protein (316 aa).

Residue Ser-128 is modified to Phosphoserine. The tract at residues 159–316 is interaction with SPAG5; sequence VRKGYKPLSK…LKEMEQLLEM (158 aa). Coiled-coil stretches lie at residues 166–216 and 248–316; these read LSKQ…FRDN and SMLL…LLEM.

As to quaternary structure, part of an astrin (SPAG5)-kinastrin (SKAP) complex containing KNSTRN, SPAG5, PLK1, DYNLL1 and SGO2. Interacts with SPAG5. Directly binds to microtubules, although at relatively low affinity. Interacts with CENPE; this interaction greatly favors microtubule-binding. Interacts with DSN1/MIS13; leading to localization to kinetochores. Interacts with MAPRE1/EB1; leading to localization to the microtubule plus ends. Interacts with PRPF19. Interacts with DYNLL1. Interacts with MAP4. In terms of tissue distribution, widely expressed, including in skin.

The protein resides in the nucleus. It is found in the chromosome. It localises to the centromere. Its subcellular location is the kinetochore. The protein localises to the cytoplasm. The protein resides in the cytoskeleton. It is found in the spindle pole. It localises to the microtubule organizing center. Essential component of the mitotic spindle required for faithful chromosome segregation and progression into anaphase. Promotes the metaphase-to-anaphase transition and is required for chromosome alignment, normal timing of sister chromatid segregation, and maintenance of spindle pole architecture. The astrin (SPAG5)-kinastrin (SKAP) complex promotes stable microtubule-kinetochore attachments. Required for kinetochore oscillations and dynamics of microtubule plus-ends during live cell mitosis, possibly by forming a link between spindle microtubule plus-ends and mitotic chromosomes to achieve faithful cell division. May be involved in UV-induced apoptosis via its interaction with PRPF19; however, these results need additional evidences. In Homo sapiens (Human), this protein is Small kinetochore-associated protein.